The primary structure comprises 969 residues: MTRVNSIIGFRPIPVTLLTVITYVSLFSALLFIDRQPPAVAKKGELDYWGVDIEEAWSDLEVLTRDFHPYNSRPNDDVRAYLLGRVQEILSRNGVSGFGNELQSSGYSGTVDLFDDGIPGKPGSNVTFVGAGSEDLTVYFEGTNIIVYIHGERPADELSPVLVSAHYDSVSTGYGATDDGAAVVSILQIIKSFTRPESQGGKRPKRGLVALLNNGEEDFLNGARAFAMHPVAKLPHSFLNLEGAGAGGRATLFRSTDAEVTKYYKRAKRPFGTIVSGDGFKAGLIRSGTDYSVFVENLGMRGLDVAFYQPRSRYHTTEDDARHSSKRSLWHMLGGSLATLRGMTDDTSKVFDSPNGSAGKGHNAVWFDLFGRAFSVLHLHTIFAFTITLIVVPFVVVLVAMWALGHFDKLYFFSNTAYIPPPPEHSIASRTTQGWRGVLRFPVAFVAASAGVVGMAFLINKINPMVVYASQYTVWTCFLSTWWIIAWVILRGADAVRPTALARGYGFLEQWLLWLVAMIGVAISIGKSHLGSGYWVLVFYSGFFTSAFISLLEMAALQKKSEVKIAVSGDDQAYPPEEHSQTGASGNISNRAANDDDDAGEHATEETPLFRGPNRPLSFAPHRNPRYDNGDHDSGDILVEEKDEAVYGGEQGWSKDLPSWTWILQFLATVPLQLVLAGSVALLLGNALAQTGADGSDMLTVLLGFGVFSIILLLPVAPFLHRITYHVTLFIFVIFVGTFIYNLAAPPFSPNARLKVYFQQTVDLQTGENNVHLVGHPDYIDRIVSKHIPSAKGKVDICQADKLKSGLRRCSWKGIAPRVVPQAPGGMPPEYGFSDWISYNVTKTGDGKATIKLRGRNTRACKLLFNKPLAKSPTLGNPIPGFPNTRELRLWSRDWERGWSVELTWEKEEDQEENKDSHSSAIVVCLWSDGNKVSDEIPALHEIRRYLPVWAIASKLADGLVEGSVPFMI.

Topologically, residues 1 to 12 (MTRVNSIIGFRP) are cytoplasmic. A helical membrane pass occupies residues 13-33 (IPVTLLTVITYVSLFSALLFI). Topologically, residues 34–381 (DRQPPAVAKK…RAFSVLHLHT (348 aa)) are vacuolar. Asn125 carries N-linked (GlcNAc...) asparagine glycosylation. The Zn(2+) site is built by His166 and Asp178. The Proton acceptor role is filled by Glu216. Positions 217, 242, and 315 each coordinate Zn(2+). Asn355 is a glycosylation site (N-linked (GlcNAc...) asparagine). The chain crosses the membrane as a helical span at residues 382–402 (IFAFTITLIVVPFVVVLVAMW). Residues 403–438 (ALGHFDKLYFFSNTAYIPPPPEHSIASRTTQGWRGV) lie on the Cytoplasmic side of the membrane. A helical membrane pass occupies residues 439–459 (LRFPVAFVAASAGVVGMAFLI). Residues 460–469 (NKINPMVVYA) are Vacuolar-facing. The chain crosses the membrane as a helical span at residues 470–490 (SQYTVWTCFLSTWWIIAWVIL). Over 491-505 (RGADAVRPTALARGY) the chain is Cytoplasmic. The chain crosses the membrane as a helical span at residues 506-526 (GFLEQWLLWLVAMIGVAISIG). The Vacuolar portion of the chain corresponds to 527 to 531 (KSHLG). Residues 532 to 552 (SGYWVLVFYSGFFTSAFISLL) traverse the membrane as a helical segment. Topologically, residues 553-662 (EMAALQKKSE…WSKDLPSWTW (110 aa)) are cytoplasmic. The segment at 571-629 (DQAYPPEEHSQTGASGNISNRAANDDDDAGEHATEETPLFRGPNRPLSFAPHRNPRYDN) is disordered. A compositionally biased stretch (polar residues) spans 581 to 592 (QTGASGNISNRA). The helical transmembrane segment at 663–683 (ILQFLATVPLQLVLAGSVALL) threads the bilayer. The Vacuolar portion of the chain corresponds to 684–698 (LGNALAQTGADGSDM). The helical transmembrane segment at 699-719 (LTVLLGFGVFSIILLLPVAPF) threads the bilayer. The Cytoplasmic portion of the chain corresponds to 720–727 (LHRITYHV). A helical membrane pass occupies residues 728-748 (TLFIFVIFVGTFIYNLAAPPF). The Vacuolar portion of the chain corresponds to 749–969 (SPNARLKVYF…LVEGSVPFMI (221 aa)). A glycan (N-linked (GlcNAc...) asparagine) is linked at Asn840.

This sequence belongs to the peptidase M28 family. It depends on Zn(2+) as a cofactor.

The protein resides in the vacuole membrane. Its function is as follows. May be involved in vacuolar sorting and osmoregulation. This chain is Vacuolar membrane protease, found in Tuber melanosporum (strain Mel28) (Perigord black truffle).